The chain runs to 51 residues: Insulin (51 aa).

Cystine bridges form between Cys-7–Cys-37, Cys-19–Cys-50, and Cys-36–Cys-41.

The protein belongs to the insulin family. Heterodimer of a B chain and an A chain linked by two disulfide bonds.

Its subcellular location is the secreted. Its function is as follows. Insulin decreases blood glucose concentration. It increases cell permeability to monosaccharides, amino acids and fatty acids. It accelerates glycolysis, the pentose phosphate cycle, and glycogen synthesis in liver. This chain is Insulin (INS), found in Meleagris gallopavo (Wild turkey).